We begin with the raw amino-acid sequence, 355 residues long: Alpha-N-acetylneuraminide alpha-2,8-sialyltransferase (355 aa).

Residues 1-28 are Cytoplasmic-facing; it reads MSPCGRALHTSRGAMAMLARKFPRTRLP. The chain crosses the membrane as a helical; Signal-anchor for type II membrane protein span at residues 29-47; the sequence is VGASALCVVVLCWLYIFPV. Topologically, residues 48–355 are lumenal; sequence YRLPNEKEIV…CEEPSPQPTS (308 aa). N-linked (GlcNAc...) asparagine glycosylation is found at Asn70 and Asn118. Cystine bridges form between Cys137-Cys286 and Cys151-Cys346. Residues Asn142 and Asn165 each contribute to the CMP-N-acetyl-beta-neuraminate site. Residues Asn213 and Asn244 are each glycosylated (N-linked (GlcNAc...) asparagine). CMP-N-acetyl-beta-neuraminate is bound by residues Ser273, Thr274, Gly275, Trp295, and His309. Residue His321 is the Proton donor/acceptor of the active site.

Belongs to the glycosyltransferase 29 family.

Its subcellular location is the golgi apparatus membrane. The enzyme catalyses an N-acetyl-alpha-neuraminyl-(2-&gt;3)-beta-D-galactosyl derivative + CMP-N-acetyl-beta-neuraminate = an N-acetyl-alpha-neuraminyl-(2-&gt;8)-N-acetyl-alpha-neuraminyl-(2-&gt;3)-beta-D-galactosyl derivative + CMP + H(+). It catalyses the reaction a ganglioside GM3 (d18:1(4E)) + CMP-N-acetyl-beta-neuraminate = a ganglioside GD3 (d18:1(4E)) + CMP + H(+). It carries out the reaction a ganglioside GD3 (d18:1(4E)) + CMP-N-acetyl-beta-neuraminate = a ganglioside GT3 (d18:1(4E)) + CMP + H(+). The catalysed reaction is a ganglioside GD1a (d18:1(4E)) + CMP-N-acetyl-beta-neuraminate = a ganglioside GT1a (d18:1(4E)) + CMP + H(+). The enzyme catalyses a ganglioside GT1b (d18:1(4E)) + CMP-N-acetyl-beta-neuraminate = a ganglioside GQ1b (d18:1(4E)) + CMP + H(+). It catalyses the reaction a ganglioside GM1b (d18:1(4E)) + CMP-N-acetyl-beta-neuraminate = a ganglioside GD1c (d18:1(4E)) + CMP + H(+). It carries out the reaction a ganglioside GD3 + CMP-N-acetyl-beta-neuraminate = a ganglioside GT3 + CMP + H(+). The catalysed reaction is [alpha-N-acetylneuraminyl-(2-&gt;8)](n)-alpha-N-acetylneuraminyl-(2-&gt;8)-alpha-N-acetylneuraminyl-(2-&gt;3)-beta-D-galactosyl-(1-&gt;4)-beta-D-glucosyl-(1&lt;-&gt;1)-ceramide + CMP-N-acetyl-beta-neuraminate = [alpha-N-acetylneuraminyl-(2-&gt;8)](n+1)-alpha-N-acetylneuraminyl-(2-&gt;8)-alpha-N-acetylneuraminyl-(2-&gt;3)-beta-D-galactosyl-(1-&gt;4)-beta-D-glucosyl-(1&lt;-&gt;1)-ceramide + CMP + H(+). It participates in protein modification; protein glycosylation. Its pathway is lipid metabolism; sphingolipid metabolism. In terms of biological role, catalyzes the addition of sialic acid in alpha 2,8-linkage to the sialic acid moiety of the ganglioside GM3 to form ganglioside GD3; gangliosides are a subfamily of complex glycosphingolipds that contain one or more residues of sialic acid. Can catalyze the addition of a second alpha-2,8- sialic acid to GD3 to form GT3. Can use GM1b, GD1a and GT1b as acceptor substrates to synthesize GD1c, GT1a and GQ1b respectively. This chain is Alpha-N-acetylneuraminide alpha-2,8-sialyltransferase, found in Mus musculus (Mouse).